Reading from the N-terminus, the 201-residue chain is Probable nicotinate-nucleotide adenylyltransferase (201 aa).

Belongs to the NadD family.

The enzyme catalyses nicotinate beta-D-ribonucleotide + ATP + H(+) = deamido-NAD(+) + diphosphate. The protein operates within cofactor biosynthesis; NAD(+) biosynthesis; deamido-NAD(+) from nicotinate D-ribonucleotide: step 1/1. In terms of biological role, catalyzes the reversible adenylation of nicotinate mononucleotide (NaMN) to nicotinic acid adenine dinucleotide (NaAD). The polypeptide is Probable nicotinate-nucleotide adenylyltransferase (Neisseria gonorrhoeae (strain ATCC 700825 / FA 1090)).